A 580-amino-acid polypeptide reads, in one-letter code: DNA ligase 1 (580 aa).

An ATP-binding site is contributed by Glu-245. Lys-247 acts as the N6-AMP-lysine intermediate in catalysis. Residues Arg-252, Arg-267, Glu-297, Phe-343, Arg-420, and Lys-426 each coordinate ATP.

Belongs to the ATP-dependent DNA ligase family. The cofactor is Mg(2+).

The catalysed reaction is ATP + (deoxyribonucleotide)n-3'-hydroxyl + 5'-phospho-(deoxyribonucleotide)m = (deoxyribonucleotide)n+m + AMP + diphosphate.. Its function is as follows. DNA ligase that seals nicks in double-stranded DNA during DNA replication, DNA recombination and DNA repair. This Methanosarcina acetivorans (strain ATCC 35395 / DSM 2834 / JCM 12185 / C2A) protein is DNA ligase 1.